The primary structure comprises 481 residues: Cysteine protease atg-4.1 (481 aa).

The active-site Nucleophile is C112. Catalysis depends on residues D313 and H315. The interval 462-481 is disordered; sequence DVHTEEEDADEDNDDDVANA.

Belongs to the peptidase C54 family.

It is found in the cytoplasm. It catalyses the reaction [protein]-C-terminal L-amino acid-glycyl-phosphatidylethanolamide + H2O = [protein]-C-terminal L-amino acid-glycine + a 1,2-diacyl-sn-glycero-3-phosphoethanolamine. Functionally, cysteine protease required for autophagy. Cleaves the C-terminal amino acid of ATG8 family proteins lgg-1, to reveal a C-terminal glycine. Exposure of the glycine at the C-terminus is essential for ATG8 proteins conjugation to phosphatidylethanolamine (PE) and insertion to membranes, which is necessary for autophagy. Its cleavage activity is functionally redundant to atg-4.2, but it cleaves lgg-1 precursors more efficiently than atg-4.2. Acts redundantly with atg-4.2 to promote the lgg-1 delipidation to release the protein from membranes, which facilitates multiple events during macroautophagy. Unlike atg-4.2 does not seem to be required for autophagosome maturation. In Caenorhabditis elegans, this protein is Cysteine protease atg-4.1.